Here is an 842-residue protein sequence, read N- to C-terminus: TATA box-binding protein-associated factor, RNA polymerase I, subunit C (842 aa).

Disordered stretches follow at residues Ser574–Thr605, Arg667–Glu690, and Gln702–Phe842. The segment covering Arg577 to Ala588 has biased composition (basic and acidic residues). A compositionally biased stretch (polar residues) spans Asp745 to Ala760. Over residues Gln783 to Met794 the composition is skewed to basic and acidic residues. At Thr808 the chain carries Phosphothreonine. Residues Pro809 to Pro826 show a composition bias toward low complexity. Residues Pro833–Phe842 show a composition bias toward basic residues.

Component of the transcription factor SL1/TIF-IB complex, composed of TBP and at least TAF1A, TAF1B, TAF1C and TAF1D. In the complex interacts directly with TBP, TAF1A and TAF1B. Interaction of the SL1/TIF-IB subunits with TBP excludes interaction of TBP with the transcription factor IID (TFIID) subunits. Interacts with MYC and RRN3. Interacts with p53/TP53; the interaction prevents the association of SL1/TIF-IB with UBTF and represses RNA polymerase I transcription. Part of Pol I pre-initiation complex (PIC), in which Pol I core assembles with RRN3 and promoter-bound UTBF and SL1/TIF-IB complex.

The protein resides in the nucleus. It is found in the nucleolus. Its function is as follows. Component of the transcription factor SL1/TIF-IB complex, which is involved in the assembly of the PIC (pre-initiation complex) during RNA polymerase I-dependent transcription. The rate of PIC formation probably is primarily dependent on the rate of association of SL1/TIF-IB with the rDNA promoter. SL1/TIF-IB is involved in stabilization of nucleolar transcription factor 1/UBTF on rDNA. Formation of SL1/TIF-IB excludes the association of TBP with TFIID subunits. Recruits RNA polymerase I to the rRNA gene promoter via interaction with RRN3. The sequence is that of TATA box-binding protein-associated factor, RNA polymerase I, subunit C (Taf1c) from Rattus norvegicus (Rat).